A 348-amino-acid polypeptide reads, in one-letter code: Protein RecA (348 aa).

Glycine 64–threonine 71 serves as a coordination point for ATP. The span at glutamate 324 to leucine 335 shows a compositional bias: basic and acidic residues. The disordered stretch occupies residues glutamate 324–glutamate 348. Acidic residues predominate over residues alanine 336–glutamate 348.

The protein belongs to the RecA family.

The protein resides in the cytoplasm. Can catalyze the hydrolysis of ATP in the presence of single-stranded DNA, the ATP-dependent uptake of single-stranded DNA by duplex DNA, and the ATP-dependent hybridization of homologous single-stranded DNAs. It interacts with LexA causing its activation and leading to its autocatalytic cleavage. This Listeria ivanovii protein is Protein RecA.